The sequence spans 79 residues: uncharacterized protein (79 aa).

This is an uncharacterized protein from Sulfolobus spindle-shape virus 1 (SSV1).